We begin with the raw amino-acid sequence, 381 residues long: L-lactate dehydrogenase (381 aa).

In terms of domain architecture, FMN hydroxy acid dehydrogenase spans 1–380 (MIISSASDYR…KPEALVDLSK (380 aa)). Substrate is bound at residue Tyr24. FMN-binding residues include Ser106 and Gln127. A substrate-binding site is contributed by Tyr129. Thr155 provides a ligand contact to FMN. Arg164 is a substrate binding site. Lys251 serves as a coordination point for FMN. His275 (proton acceptor) is an active-site residue. Substrate is bound at residue Arg278. 306–330 (DSGIRNGLDIVRMLALGADATMLGR) lines the FMN pocket.

This sequence belongs to the FMN-dependent alpha-hydroxy acid dehydrogenase family. It depends on FMN as a cofactor.

The protein localises to the cell inner membrane. The enzyme catalyses (S)-lactate + A = pyruvate + AH2. Its function is as follows. Catalyzes the conversion of L-lactate to pyruvate. Is coupled to the respiratory chain. In Haemophilus influenzae (strain ATCC 51907 / DSM 11121 / KW20 / Rd), this protein is L-lactate dehydrogenase.